Here is a 97-residue protein sequence, read N- to C-terminus: Aspartyl/glutamyl-tRNA(Asn/Gln) amidotransferase subunit C (97 aa).

The tract at residues 59-78 (STGKLRPDEPAQPLSRDDAL) is disordered. Over residues 63–78 (LRPDEPAQPLSRDDAL) the composition is skewed to basic and acidic residues.

This sequence belongs to the GatC family. Heterotrimer of A, B and C subunits.

It carries out the reaction L-glutamyl-tRNA(Gln) + L-glutamine + ATP + H2O = L-glutaminyl-tRNA(Gln) + L-glutamate + ADP + phosphate + H(+). It catalyses the reaction L-aspartyl-tRNA(Asn) + L-glutamine + ATP + H2O = L-asparaginyl-tRNA(Asn) + L-glutamate + ADP + phosphate + 2 H(+). Functionally, allows the formation of correctly charged Asn-tRNA(Asn) or Gln-tRNA(Gln) through the transamidation of misacylated Asp-tRNA(Asn) or Glu-tRNA(Gln) in organisms which lack either or both of asparaginyl-tRNA or glutaminyl-tRNA synthetases. The reaction takes place in the presence of glutamine and ATP through an activated phospho-Asp-tRNA(Asn) or phospho-Glu-tRNA(Gln). The protein is Aspartyl/glutamyl-tRNA(Asn/Gln) amidotransferase subunit C of Metallosphaera sedula (strain ATCC 51363 / DSM 5348 / JCM 9185 / NBRC 15509 / TH2).